Here is an 83-residue protein sequence, read N- to C-terminus: Small ribosomal subunit protein bS16 (83 aa).

This sequence belongs to the bacterial ribosomal protein bS16 family.

The polypeptide is Small ribosomal subunit protein bS16 (Pseudomonas aeruginosa (strain UCBPP-PA14)).